A 150-amino-acid chain; its full sequence is uncharacterized protein (150 aa).

The N-terminal stretch at 1–28 (MPLDVWIAFSYFIDFFQWLFMLNAEVMR) is a signal peptide.

This is an uncharacterized protein from Archaeoglobus fulgidus (strain ATCC 49558 / DSM 4304 / JCM 9628 / NBRC 100126 / VC-16).